We begin with the raw amino-acid sequence, 199 residues long: Pyridoxine/pyridoxamine 5'-phosphate oxidase (199 aa).

Residues 44-49 (RTVLLK), 59-60 (YT), Lys66, and Gln91 each bind FMN. Lys49 contacts substrate. Residues Tyr109, Arg113, and Ser117 each coordinate substrate. FMN is bound by residues 126–127 (QS) and Trp171. Substrate is bound at residue 177–179 (RLH). Arg181 lines the FMN pocket.

Belongs to the pyridoxamine 5'-phosphate oxidase family. Homodimer. FMN serves as cofactor.

The enzyme catalyses pyridoxamine 5'-phosphate + O2 + H2O = pyridoxal 5'-phosphate + H2O2 + NH4(+). The catalysed reaction is pyridoxine 5'-phosphate + O2 = pyridoxal 5'-phosphate + H2O2. The protein operates within cofactor metabolism; pyridoxal 5'-phosphate salvage; pyridoxal 5'-phosphate from pyridoxamine 5'-phosphate: step 1/1. It participates in cofactor metabolism; pyridoxal 5'-phosphate salvage; pyridoxal 5'-phosphate from pyridoxine 5'-phosphate: step 1/1. In terms of biological role, catalyzes the oxidation of either pyridoxine 5'-phosphate (PNP) or pyridoxamine 5'-phosphate (PMP) into pyridoxal 5'-phosphate (PLP). This Xanthomonas axonopodis pv. citri (strain 306) protein is Pyridoxine/pyridoxamine 5'-phosphate oxidase.